The chain runs to 547 residues: Methionine--tRNA ligase (547 aa).

The short motif at 15 to 25 (PYANGSIHIGH) is the 'HIGH' region element. Zn(2+) contacts are provided by C146, C149, C159, and C162. The 'KMSKS' region motif lies at 332-336 (KLSKS). K335 lines the ATP pocket.

This sequence belongs to the class-I aminoacyl-tRNA synthetase family. MetG type 1 subfamily. As to quaternary structure, monomer. Zn(2+) is required as a cofactor.

Its subcellular location is the cytoplasm. The catalysed reaction is tRNA(Met) + L-methionine + ATP = L-methionyl-tRNA(Met) + AMP + diphosphate. Functionally, is required not only for elongation of protein synthesis but also for the initiation of all mRNA translation through initiator tRNA(fMet) aminoacylation. The polypeptide is Methionine--tRNA ligase (metG) (Buchnera aphidicola subsp. Acyrthosiphon pisum (strain APS) (Acyrthosiphon pisum symbiotic bacterium)).